The sequence spans 1647 residues: MSVQAYTNTPNLPNLIHSESITNSPVFIPNLRSKSDNKHRLNTSEELPFTKKRRATKHFLKMEVSAKISEPPSSKSVEFGRHLNMRHDFSELLEQPLTTSKTRVFKSFNEKLKGKPQLVKSDKGVLPLNKQSDILNSYERVLSNASVDSALDKKAEVDIIPFDKSVMEPKNITFNDKSGLTKFGNSNSYETTYSDSSNYHTSTDSSQYNDQDDHVYDDTNDGTDDDINNNEYKDDESSSGSESYERDEDVDEEEEEDDDENNDEGDDEDENENDELRSENGSPNPSAAVINEQENMNMSGIEEYDETNLLNELGRIRRGNQFQSLASSILSSGNLENSDDEDVSLGPQTYRFNSSFHPFRSAFSAPGVQFGRLLEGIKDFSDPTVQMLSLQELSEAFAMSTEDMLVGLFSTDSYIAAFSEILSGRNYDFGEVSIQLMLSCTTCVSNMMEALPLCMAKIAYSPIVRILCERMFDMQYIDIAEQALGVLERLSKDFGICILEHRGMLAALQYFDFFYTTVQRTAISLAANCCKFLDESNASAAEEIIPLLSNILQSSDTIVVSKAYSCLETIIESLKTSPNIIETIISEDLITTIVNALTNSTSQNKSMHLQVQLLHIISSLCQSSSALILPFLNHNLPDVMYEMLCGIPPSDTSHQADMITMQSLYYCPIELIENLLRAITSLLPKNTSNLSDEFNTKLYRLNSILLTVVMDIYFIVPLHDIRSLAVTTALKMLCSIRENNLDGLVCSLPLSSFIASILNSRKSDNFLKRDALEMCLFLLEALPNVYSSLFIREGVVQEVGFLVRSTNADMKKIKLSISFSQNKSAARHEELKNLSTLKSLAKEFLSNYKEENLENSTLVQLKQLSKHLLSETKQDESFSELAKIFQEGSNITSHELLHSGLIHNLLLSLKKFGSSSLRTFLLAMNTCDEREVLEFGNGPLVSLIFCLQNLLSTVENFQLSTLPPDTENAVDHVFSRQFKLRLMALPGSRIRPPFRSLVVSINGLATIRTLDNYLHSRISVRNETGRRFSILREAGSLRESMSGSSRNSSGDYTDSMSQDAPNHTTEPSERRDSSTSSHFEEHFVFSLMGKKVPRNKTIFRILYEYIQLSDDHTLDDFWKTPVPIFYGEPDCIHNDMKGELNYENETEGFSINIREILDLLSILYYGIRDVHTLFPDKHFRGNIENILTDFSNWKLSAKLNRQLEEQQLVVHGCLPSWCISLTSAYPFLVPFETRYLLLQSTAFGLSRSVSFLLSRNPELSKNESSSILQFVSLHRQKIRISRKKIFNYALHLLATYAASENILEIEYEDEVGSGLGPTLEFYTSVSKEFTLNSLDIWRNDQPNSKFVYQASGLFPSPIPLLGSSPENERKISLFFALGQFVARSIYDSRIISIQFNPLFFARNIPLTISSVAKVDKGLANSLRYLEKLIPGKNPTNAETDIKLEDLHLDFTLPGFPSIELIPDGASTPVTTFNVSDYLNYVIDYTVGKGVQQQLEAFQNGFSSVFPYTSLQVLTEHELVTLFGTVDEDWSYATLMKSIVADHGYTMESPTIQRLLTLMSQMNFQEQRDFLQFITGSRKLPIGGFAGLNPPLTVVRRLNEPPYVPDDYLPSVMTCVNYLKLPEYSSSEVLGSRLSKAILEGQGSFHLS.

The segment covering 192–209 (TYSDSSNYHTSTDSSQYN) has biased composition (polar residues). Disordered stretches follow at residues 192–288 (TYSD…PSAA) and 1039–1076 (ESMS…SSTS). Composition is skewed to acidic residues over residues 218-228 (DTNDGTDDDIN) and 245-273 (ERDE…ENEN). The segment covering 1039 to 1050 (ESMSGSSRNSSG) has biased composition (low complexity). Residues 1051–1065 (DYTDSMSQDAPNHTT) show a composition bias toward polar residues. Over residues 1066 to 1076 (EPSERRDSSTS) the composition is skewed to basic and acidic residues. The K-box stretch occupies residues 1183–1257 (IENILTDFSN…SVSFLLSRNP (75 aa)). The 354-residue stretch at 1294 to 1647 (ATYAASENIL…LEGQGSFHLS (354 aa)) folds into the HECT domain. C1614 acts as the Glycyl thioester intermediate in catalysis.

This sequence belongs to the UPL family. K-HECT subfamily.

It carries out the reaction S-ubiquitinyl-[E2 ubiquitin-conjugating enzyme]-L-cysteine + [acceptor protein]-L-lysine = [E2 ubiquitin-conjugating enzyme]-L-cysteine + N(6)-ubiquitinyl-[acceptor protein]-L-lysine.. Its function is as follows. E3 ubiquitin-protein ligase which accepts ubiquitin from an E2 ubiquitin-conjugating enzyme in the form of a thioester and then directly transfers the ubiquitin to targeted substrates. This Schizosaccharomyces pombe (strain 972 / ATCC 24843) (Fission yeast) protein is Probable ubiquitin fusion degradation protein C12B10.01c.